The chain runs to 440 residues: KH domain-containing protein 3 (440 aa).

Positions 1–39 are involved in RNA binding; that stretch reads MASLKRFQTLVPLDHKQGTLFEIIGEPKLPKWFHVECLE. The region spanning 40–118 is the KH; atypical domain; sequence DPKRLYVEPR…CRMKLMEIEA (79 aa). The tract at residues 132–201 is disordered; it reads KAATQPAPVK…EVREAATEQA (70 aa). Residue Ser151 is modified to Phosphoserine; by ATR. Phosphothreonine is present on residues Thr274 and Thr286. The interval 341–440 is required for interaction with NUMA1 and regulation of apoptosis in response to DNA damage; that stretch reads VREAATQLSP…RDAWESFIIL (100 aa). Residue Ser349 is modified to Phosphoserine.

It belongs to the KHDC1 family. As to quaternary structure, component of the subcortical maternal complex (SCMC), at least composed of NLRP5, KHDC3, OOEP, and TLE6. Within the complex, interacts with NLRP5, OOEP and TLE6. The SCMC may facilitate translocation of its components between the nuclear and cytoplasmic compartments. Forms a scaffold complex with OOEP/FLOPED, and interacts with BLM and TRIM25 at DNA replication forks. Interacts with PARP1; the interaction is increased following the formation of DNA double-strand breaks. Interacts (via C-terminus) with NUMA1. In terms of processing, phosphorylation at Ser-151 is required to promote stalled fork restart. Detected in ovary, but not in testis or somatic tissues. In the ovary, expressed in growing oocytes.

The protein resides in the cytoplasm. It is found in the cell cortex. Its subcellular location is the nucleus. It localises to the mitochondrion. The protein localises to the cytoskeleton. The protein resides in the microtubule organizing center. It is found in the centrosome. Its subcellular location is the chromosome. Functionally, component of the subcortical maternal complex (SCMC), a multiprotein complex that plays a key role in early embryonic development. The SCMC complex is a structural constituent of cytoplasmic lattices, which consist in fibrous structures found in the cytoplasm of oocytes and preimplantation embryos. They are required to store maternal proteins critical for embryonic development, such as proteins that control epigenetic reprogramming of the preimplantation embryo, and prevent their degradation or activation. KHDC3 ensures proper spindle assembly by regulating the localization of AURKA via RHOA signaling and of PLK1 via a RHOA-independent process. Required for the localization of MAD2L1 to kinetochores to enable spindle assembly checkpoint function. As part of the OOEP-KHDC3 scaffold, recruits BLM and TRIM25 to DNA replication forks, thereby promoting the ubiquitination of BLM by TRIM25, enhancing BLM retainment at replication forks and therefore promoting stalled replication fork restart. Regulates homologous recombination-mediated DNA repair via recruitment of RAD51 to sites of DNA double-strand breaks, and sustainment of PARP1 activity, which in turn modulates downstream ATM or ATR activation. Activation of ATM or ATR in response to DNA double-strand breaks may be cell-type specific. Its role in DNA double-strand break repair is independent of its role in restarting stalled replication forks. Promotes neural stem cell neurogenesis and neuronal differentiation in the hippocampus. May regulate normal development of learning, memory and anxiety. Capable of binding RNA. This is KH domain-containing protein 3 from Mus musculus (Mouse).